We begin with the raw amino-acid sequence, 32 residues long: MEALVYTFLLIGTLMVIFFAVFFRETPRILRK.

A helical transmembrane segment spans residues 3–23 (ALVYTFLLIGTLMVIFFAVFF).

Belongs to the PsbT family. PSII is composed of 1 copy each of membrane proteins PsbA, PsbB, PsbC, PsbD, PsbE, PsbF, PsbH, PsbI, PsbJ, PsbK, PsbL, PsbM, PsbT, PsbX, PsbY, PsbZ, Psb30/Ycf12, at least 3 peripheral proteins of the oxygen-evolving complex and a large number of cofactors. It forms dimeric complexes.

The protein resides in the plastid. The protein localises to the chloroplast thylakoid membrane. Found at the monomer-monomer interface of the photosystem II (PS II) dimer, plays a role in assembly and dimerization of PSII. PSII is a light-driven water plastoquinone oxidoreductase, using light energy to abstract electrons from H(2)O, generating a proton gradient subsequently used for ATP formation. The protein is Photosystem II reaction center protein T of Trieres chinensis (Marine centric diatom).